The chain runs to 237 residues: Periplasmic deoxyribonuclease (237 aa).

The N-terminal stretch at 1–27 is a signal peptide; that stretch reads MSRPSRVLGLPLLSLGLTLLVSTPLQA.

Belongs to the EndA/NucM nuclease family.

Its subcellular location is the periplasm. Its function is as follows. Endonuclease which is capable of degrading plasmid DNA. In Aeromonas hydrophila, this protein is Periplasmic deoxyribonuclease (dnsH).